Here is a 413-residue protein sequence, read N- to C-terminus: Probable tRNA pseudouridine synthase D (413 aa).

Asp97 acts as the Nucleophile in catalysis. One can recognise a TRUD domain in the interval 167–370 (AVPNYYGYQR…YGSYRRARLE (204 aa)).

Belongs to the pseudouridine synthase TruD family.

The catalysed reaction is uridine(13) in tRNA = pseudouridine(13) in tRNA. In terms of biological role, could be responsible for synthesis of pseudouridine from uracil-13 in transfer RNAs. In Pyrobaculum arsenaticum (strain DSM 13514 / JCM 11321 / PZ6), this protein is Probable tRNA pseudouridine synthase D.